Reading from the N-terminus, the 392-residue chain is Integrin-linked kinase-associated serine/threonine phosphatase 2C (392 aa).

At methionine 1 the chain carries N-acetylmethionine. Residues 1–91 (MDLFGDLPEP…PEEEKNGGEE (91 aa)) are disordered. Over residues 56–70 (SGNSGSLATSGSQVV) the composition is skewed to polar residues. The segment covering 72–91 (TEGKGAKRKAPEEEKNGGEE) has biased composition (basic and acidic residues). The PPM-type phosphatase domain occupies 108-390 (KGYVAERKGE…DNVTVMVVRI (283 aa)). Mn(2+)-binding residues include aspartate 152 and glycine 153. Lysine 210 bears the N6-acetyllysine mark. Residues aspartate 326 and aspartate 381 each contribute to the Mn(2+) site.

This sequence belongs to the PP2C family. In terms of assembly, interacts with ILK. The cofactor is Mg(2+). Requires Mn(2+) as cofactor.

Its subcellular location is the cytoplasm. It catalyses the reaction O-phospho-L-seryl-[protein] + H2O = L-seryl-[protein] + phosphate. The enzyme catalyses O-phospho-L-threonyl-[protein] + H2O = L-threonyl-[protein] + phosphate. In terms of biological role, protein phosphatase that may play a role in regulation of cell cycle progression via dephosphorylation of its substrates whose appropriate phosphorylation states might be crucial for cell proliferation. Selectively associates with integrin linked kinase (ILK), to modulate cell adhesion and growth factor signaling. Inhibits the ILK-GSK3B signaling axis and may play an important role in inhibiting oncogenic transformation. The polypeptide is Integrin-linked kinase-associated serine/threonine phosphatase 2C (Ilkap) (Mus musculus (Mouse)).